A 706-amino-acid polypeptide reads, in one-letter code: MRLAIRALLACAVLGLCLAEQTVRWCTVSNHEVSKCASFRDSMKSIVPAPPLVACVKRTSYLECIKAIADNEADAVTLDAGLVFEAGLSPYNLKPVVAEFYGSKTEPQTHYYAVAVVKKNSNFQLNQLQGKKSCHTGLGRSAGWNIPIGLLYWQLPEPRESLQKAVSNFFAGSCVPCADRTAVPNLCQLCVGKGTDKCACSNHEPYFGYSGAFKCLADGAGDVAFVKHSTVLENLPQEADRDEYQLLCRDNTRKSVDEYKDCYLASIPSHAVVARSVDGKEDLIWGLLNQAQEHFGTEKSKDFHLFSSPHGKDLLFKDSALGFLRIPPAMDTWLYLGYEYVTAIRNLREDIRPEVPKDECKKVKWCAIGHHEKVKCDEWSVNSGGNIECESAQSTEDCIAKIVKGEADAMSLDGGFIYIAGKCGLVPVLAENYETRSGSACVDTPEEGYHAVAVVKSSSDPDLTWNSLKGKKSCHTGVDRTAGWNIPMGLLYSEIKHCEFDKFFREGCAPGYRRNSTLCNLCIGSASGPGRECEPNNHERYYGYTGAFRCLVEKGDVAFVKHQTVEQNTDGRNPDDWAKDLKSENFKLLCPDGTRKSVTEFKSCYLARAPNHAVVSRKEKAACVCQELHNQQASYGKNGSHCPDKFCLFQSATKDLLFRDDTQCLANLQPTTTYKTYLGEKYLTAVANLRQCSTSRLLEACTFHRV.

Positions 1–19 (MRLAIRALLACAVLGLCLA) are cleaved as a signal peptide. Transferrin-like domains lie at 23-349 (VRWC…NLRE) and 363-691 (VKWC…NLRQ). Cystine bridges form between Cys-26–Cys-64 and Cys-36–Cys-55. Arg-40 carries the dimethylated arginine modification. Fe(3+) contacts are provided by Asp-79 and Tyr-111. 5 cysteine pairs are disulfide-bonded: Cys-134-Cys-215, Cys-174-Cys-190, Cys-177-Cys-198, Cys-187-Cys-200, and Cys-248-Cys-262. Residues Thr-136, Arg-140, Ala-142, and Gly-143 each contribute to the hydrogencarbonate site. Tyr-209 is a binding site for Fe(3+). His-270 provides a ligand contact to Fe(3+). 11 disulfide bridges follow: Cys-360–Cys-623, Cys-366–Cys-398, Cys-376–Cys-389, Cys-423–Cys-701, Cys-441–Cys-664, Cys-474–Cys-550, Cys-498–Cys-692, Cys-508–Cys-522, Cys-519–Cys-533, Cys-590–Cys-604, and Cys-642–Cys-647. Ser-391 bears the Phosphoserine mark. Residues Asp-413 and Tyr-449 each contribute to the Fe(3+) site. Positions 476, 480, 482, and 483 each coordinate hydrogencarbonate. The N-linked (GlcNAc...) asparagine glycan is linked to Asn-515. Position 544 (Tyr-544) interacts with Fe(3+). His-612 is a Fe(3+) binding site. Phosphoserine is present on Ser-693.

This sequence belongs to the transferrin family. Monomer. Part of a complex composed of SLC40A1/ferroportin, TF/transferrin and HEPH/hephaestin that transfers iron from cells to transferrin. As to expression, expressed by the liver and secreted in plasma.

The protein resides in the secreted. Its function is as follows. Transferrins are iron binding transport proteins which can bind two Fe(3+) ions in association with the binding of an anion, usually bicarbonate. It is responsible for the transport of iron from sites of absorption and heme degradation to those of storage and utilization. Serum transferrin may also have a further role in stimulating cell proliferation. This is Serotransferrin (TF) from Equus caballus (Horse).